Here is a 565-residue protein sequence, read N- to C-terminus: CTP synthase (565 aa).

The amidoligase domain stretch occupies residues 1–272 (MARPKNVKHI…DLRVMKKLGL (272 aa)). Residue serine 18 participates in CTP binding. Serine 18 is a binding site for UTP. 19 to 24 (SLGKGI) serves as a coordination point for ATP. Tyrosine 59 contributes to the L-glutamine binding site. Residue aspartate 76 coordinates ATP. Mg(2+) contacts are provided by aspartate 76 and glutamate 146. Residues 153–155 (DIE), 193–198 (KTKPTQ), and lysine 229 each bind CTP. UTP-binding positions include 193–198 (KTKPTQ) and lysine 229. In terms of domain architecture, Glutamine amidotransferase type-1 spans 299–543 (TIGVCGKYTE…VQAAKEFAMG (245 aa)). Glycine 363 lines the L-glutamine pocket. The active-site Nucleophile; for glutamine hydrolysis is the cysteine 390. L-glutamine is bound by residues 391–394 (LGMQ), glutamate 414, and arginine 471. Catalysis depends on residues histidine 516 and glutamate 518.

The protein belongs to the CTP synthase family. As to quaternary structure, homotetramer.

The catalysed reaction is UTP + L-glutamine + ATP + H2O = CTP + L-glutamate + ADP + phosphate + 2 H(+). The enzyme catalyses L-glutamine + H2O = L-glutamate + NH4(+). It carries out the reaction UTP + NH4(+) + ATP = CTP + ADP + phosphate + 2 H(+). The protein operates within pyrimidine metabolism; CTP biosynthesis via de novo pathway; CTP from UDP: step 2/2. Allosterically activated by GTP, when glutamine is the substrate; GTP has no effect on the reaction when ammonia is the substrate. The allosteric effector GTP functions by stabilizing the protein conformation that binds the tetrahedral intermediate(s) formed during glutamine hydrolysis. Inhibited by the product CTP, via allosteric rather than competitive inhibition. Functionally, catalyzes the ATP-dependent amination of UTP to CTP with either L-glutamine or ammonia as the source of nitrogen. Regulates intracellular CTP levels through interactions with the four ribonucleotide triphosphates. The protein is CTP synthase of Chlorobaculum parvum (strain DSM 263 / NCIMB 8327) (Chlorobium vibrioforme subsp. thiosulfatophilum).